The primary structure comprises 117 residues: Reprimo-like protein (117 aa).

Residues 64–84 traverse the membrane as a helical segment; sequence VAQIAVLCVLSLTVVFGVFFL. S106 is modified (phosphoserine).

The protein belongs to the reprimo family.

Its subcellular location is the membrane. The chain is Reprimo-like protein (Rprml) from Mus musculus (Mouse).